A 137-amino-acid polypeptide reads, in one-letter code: Protein Flattop homolog (137 aa).

This sequence belongs to the Flattop family.

Its subcellular location is the cytoplasm. The protein resides in the cytoskeleton. The protein localises to the flagellum axoneme. In terms of biological role, microtubule inner protein (MIP) part of the dynein-decorated doublet microtubules (DMTs) in cilia axoneme. Acts as a regulator of cilium basal body docking and positioning in mono- and multiciliated cells. Regulates basal body docking and cilia formation in multiciliated lung cells. Regulates kinocilium positioning and stereocilia bundle morphogenesis in the inner ear. The sequence is that of Protein Flattop homolog from Chlamydomonas reinhardtii (Chlamydomonas smithii).